Reading from the N-terminus, the 60-residue chain is Protein K12 (60 aa).

The protein is Protein K12 (K12) of Human herpesvirus 8 type P (isolate GK18) (HHV-8).